The chain runs to 423 residues: Glutamyl-tRNA reductase (423 aa).

Substrate is bound by residues 49–52 (TCNR), Ser-109, 114–116 (EGQ), and Gln-120. Catalysis depends on Cys-50, which acts as the Nucleophile. Residue 189–194 (GAGETG) participates in NADP(+) binding.

Belongs to the glutamyl-tRNA reductase family. In terms of assembly, homodimer.

The enzyme catalyses (S)-4-amino-5-oxopentanoate + tRNA(Glu) + NADP(+) = L-glutamyl-tRNA(Glu) + NADPH + H(+). The protein operates within porphyrin-containing compound metabolism; protoporphyrin-IX biosynthesis; 5-aminolevulinate from L-glutamyl-tRNA(Glu): step 1/2. Its pathway is porphyrin-containing compound metabolism; chlorophyll biosynthesis. In terms of biological role, catalyzes the NADPH-dependent reduction of glutamyl-tRNA(Glu) to glutamate 1-semialdehyde (GSA). In Chlorobium limicola (strain DSM 245 / NBRC 103803 / 6330), this protein is Glutamyl-tRNA reductase.